Reading from the N-terminus, the 174-residue chain is NADH-ubiquinone oxidoreductase chain 6 (174 aa).

5 helical membrane-spanning segments follow: residues 4-24, 25-45, 48-68, 82-102, and 143-163; these read LIIMTICLIISFIFMQMKHPL, SMGLMLLTQTFLTCLLTGIYV, FWFSYVLFLIFLGGMLILFIY, FNLTTLSLLIFFLMTLFFFII, and LITLLLINYLFLTLLVTVKIT.

This sequence belongs to the complex I subunit 6 family.

The protein localises to the mitochondrion membrane. It catalyses the reaction a ubiquinone + NADH + 5 H(+)(in) = a ubiquinol + NAD(+) + 4 H(+)(out). Functionally, core subunit of the mitochondrial membrane respiratory chain NADH dehydrogenase (Complex I) that is believed to belong to the minimal assembly required for catalysis. Complex I functions in the transfer of electrons from NADH to the respiratory chain. The immediate electron acceptor for the enzyme is believed to be ubiquinone. The polypeptide is NADH-ubiquinone oxidoreductase chain 6 (ND6) (Anopheles quadrimaculatus (Common malaria mosquito)).